Reading from the N-terminus, the 377-residue chain is MAKRDFYEVLGVERGASEADLKKAYRRLAMKYHPDRNPGDKEAEDKFKEANEAYEVLSDASKRAAYDQYGHAGVDPNMGGGAGAGFGGASFSDIFGDVFSDFFGGGGARGGSRGGAQRGADLRYTLDLDLEEAVRGTTVTIRVPTLVGCKTCNGSGAKPGTTPVTCTTCGGIGQVRMQQGFFSVQQTCPRCHGTGKMISDPCGSCHGQGRVEEQKTLSVKVPAGVDTGDRIRLTGEGEAGSMGGPAGDLYVVVNVREHPIFQRDGKHLYCEVPISFADAALGGELEVPTLDGRVKLKIPESTQTGKLFRLRGKGVAPVRGGGAGDLMCKVVVETPVNLDKRQRELLEEFRKSLQSDTSHSPKASGWFEGMKRFFDDL.

The 66-residue stretch at 5–70 folds into the J domain; the sequence is DFYEVLGVER…SKRAAYDQYG (66 aa). A CR-type zinc finger spans residues 136–214; it reads GTTVTIRVPT…CHGQGRVEEQ (79 aa). Residues Cys149, Cys152, Cys166, Cys169, Cys188, Cys191, Cys202, and Cys205 each contribute to the Zn(2+) site. CXXCXGXG motif repeat units follow at residues 149 to 156, 166 to 173, 188 to 195, and 202 to 209; these read CKTCNGSG, CTTCGGIG, CPRCHGTG, and CGSCHGQG.

This sequence belongs to the DnaJ family. In terms of assembly, homodimer. It depends on Zn(2+) as a cofactor.

Its subcellular location is the cytoplasm. Its function is as follows. Participates actively in the response to hyperosmotic and heat shock by preventing the aggregation of stress-denatured proteins and by disaggregating proteins, also in an autonomous, DnaK-independent fashion. Unfolded proteins bind initially to DnaJ; upon interaction with the DnaJ-bound protein, DnaK hydrolyzes its bound ATP, resulting in the formation of a stable complex. GrpE releases ADP from DnaK; ATP binding to DnaK triggers the release of the substrate protein, thus completing the reaction cycle. Several rounds of ATP-dependent interactions between DnaJ, DnaK and GrpE are required for fully efficient folding. Also involved, together with DnaK and GrpE, in the DNA replication of plasmids through activation of initiation proteins. The protein is Chaperone protein DnaJ of Pseudomonas aeruginosa (strain LESB58).